We begin with the raw amino-acid sequence, 64 residues long: Alpha-like toxin BmK M2 (64 aa).

The 63-residue stretch at 2–64 (RDAYIAKPHN…VPIRVPGKCH (63 aa)) folds into the LCN-type CS-alpha/beta domain. Intrachain disulfides connect C12/C63, C16/C36, C22/C46, and C26/C48.

Belongs to the long (4 C-C) scorpion toxin superfamily. Sodium channel inhibitor family. Alpha subfamily. In terms of tissue distribution, expressed by the venom gland.

It is found in the secreted. Its function is as follows. Alpha toxins bind voltage-independently at site-3 of sodium channels (Nav) and inhibit the inactivation of the activated channels, thereby blocking neuronal transmission. This toxin is active against both mammals and insects, and is classified as an alpha-like toxin. The chain is Alpha-like toxin BmK M2 from Olivierus martensii (Manchurian scorpion).